The sequence spans 147 residues: MWLPTPLGPLWLEVSPLGVRRLEPALYPRGPEAEGALALRVREAVQAYFAGERPDFLDLPLDYTGLSPARLRLYERVRLVPYGRTVSYGALGRELGLSPRAVGAALRACPFFLLVPAHRVIHADGRLGGFQGQEGLKLWLLRFEGAL.

This sequence belongs to the MGMT family. ATL subfamily. As to quaternary structure, interacts with several proteins, including UvrA, UvrD and the three subunits of the RNA polymerase.

In terms of biological role, involved in DNA damage recognition. Binds DNA containing O(6)-methylguanine and larger O(6)-alkylguanine adducts. Binds to the damaged base and flips the base out of the DNA duplex into an extrahelical conformation, which allows processing by repair proteins. Also affects the regulation of gene expression in response to alkylation. The chain is DNA base-flipping protein from Thermus thermophilus (strain ATCC 27634 / DSM 579 / HB8).